The following is a 231-amino-acid chain: MLLTPTELERLTLYTAAELSRKRRSKGLRLNFPEASALIADEILEGAREGRSVAELIGFGSTILNTDDVMPGVADLLPVLQVEGTFPDGTKLVTVHQPIRPGQLPLAVMPTPGEILAPDGDIHLNGDRPTATLRAINTGDRPVQIGSHYHFFEVNKALDFPRERAFGMHLDIPAGTAVRFEPGELREVQLVQFGGTGDIHGFSGLTNGNLHDPACKLAALERARAQFFKGA.

The urease gamma stretch occupies residues 1 to 101 (MLLTPTELER…LVTVHQPIRP (101 aa)). Positions 102–231 (GQLPLAVMPT…RARAQFFKGA (130 aa)) are urease beta.

The protein in the N-terminal section; belongs to the urease gamma subunit family. It in the C-terminal section; belongs to the urease beta subunit family. In terms of assembly, heterohexamer of 3 UreC (alpha) and 3 UreAB (gamma/beta) subunits.

The protein resides in the cytoplasm. The enzyme catalyses urea + 2 H2O + H(+) = hydrogencarbonate + 2 NH4(+). Its pathway is nitrogen metabolism; urea degradation; CO(2) and NH(3) from urea (urease route): step 1/1. The protein is Urease subunit gamma/beta of Pseudomonas syringae pv. syringae (strain B728a).